We begin with the raw amino-acid sequence, 325 residues long: Malate dehydrogenase (325 aa).

11–17 (GAAGHVS) provides a ligand contact to NAD(+). Arg-92 and Arg-98 together coordinate substrate. Residues Asn-105, Gln-112, and 129-131 (VGN) each bind NAD(+). 2 residues coordinate substrate: Asn-131 and Arg-162. His-187 acts as the Proton acceptor in catalysis.

Belongs to the LDH/MDH superfamily. MDH type 2 family.

The enzyme catalyses (S)-malate + NAD(+) = oxaloacetate + NADH + H(+). Its function is as follows. Catalyzes the reversible oxidation of malate to oxaloacetate. This Desulfotalea psychrophila (strain LSv54 / DSM 12343) protein is Malate dehydrogenase.